We begin with the raw amino-acid sequence, 661 residues long: Translation factor GUF1 homolog, mitochondrial (661 aa).

Positions 59–242 (ENIRNFCIVA…AIIDRIPSPK (184 aa)) constitute a tr-type G domain. GTP is bound by residues 68–75 (AHVDHGKS), 135–139 (DTPGH), and 189–192 (NKVD).

This sequence belongs to the TRAFAC class translation factor GTPase superfamily. Classic translation factor GTPase family. LepA subfamily.

The protein resides in the mitochondrion inner membrane. The catalysed reaction is GTP + H2O = GDP + phosphate + H(+). Its function is as follows. Promotes mitochondrial protein synthesis. May act as a fidelity factor of the translation reaction, by catalyzing a one-codon backward translocation of tRNAs on improperly translocated ribosomes. Binds to mitochondrial ribosomes in a GTP-dependent manner. In Ixodes scapularis (Black-legged tick), this protein is Translation factor GUF1 homolog, mitochondrial.